Reading from the N-terminus, the 772-residue chain is Carnitine O-palmitoyltransferase 1, muscle isoform (772 aa).

At 1-47 the chain is on the cytoplasmic side; the sequence is MAEAHQAVAFQFTVTPDGVDFRLSREALKHVYLSGINSWKKRLIRIK. A helical transmembrane segment spans residues 48–73; that stretch reads NGILRGVYPGSPTSWLVVIMATVGSS. Residues 74–102 are Mitochondrial intermembrane-facing; it reads FCNVDISLGLVSCIQRCLPQGCGPYQTPQ. Residues 103–122 traverse the membrane as a helical segment; sequence TRALLSMAIFSTGVWVTGIF. Residues 123–772 lie on the Cytoplasmic side of the membrane; that stretch reads FFRQTLKLLL…DLFQVPKAYS (650 aa). Histidine 473 serves as the catalytic Proton acceptor. Position 555 to 567 (555 to 567) interacts with CoA; the sequence is GKGLIKKCRTSPD. (R)-carnitine is bound by residues tyrosine 589 and threonine 602.

This sequence belongs to the carnitine/choline acetyltransferase family. As to expression, strong expression in heart and skeletal muscle. No expression in liver and kidney.

It localises to the mitochondrion outer membrane. The enzyme catalyses (R)-carnitine + hexadecanoyl-CoA = O-hexadecanoyl-(R)-carnitine + CoA. It functions in the pathway lipid metabolism; fatty acid beta-oxidation. Catalyzes the transfer of the acyl group of long-chain fatty acid-CoA conjugates onto carnitine, an essential step for the mitochondrial uptake of long-chain fatty acids and their subsequent beta-oxidation in the mitochondrion. The sequence is that of Carnitine O-palmitoyltransferase 1, muscle isoform (CPT1B) from Homo sapiens (Human).